Here is a 656-residue protein sequence, read N- to C-terminus: DNA ligase (656 aa).

NAD(+) is bound by residues D32–D36 and S81–L82. The active-site N6-AMP-lysine intermediate is K112. NAD(+) is bound by residues R133, E167, and K306. Zn(2+) is bound by residues C400, C403, C416, and C421. The BRCT domain maps to K577–D656.

It belongs to the NAD-dependent DNA ligase family. LigA subfamily. It depends on Mg(2+) as a cofactor. The cofactor is Mn(2+).

It catalyses the reaction NAD(+) + (deoxyribonucleotide)n-3'-hydroxyl + 5'-phospho-(deoxyribonucleotide)m = (deoxyribonucleotide)n+m + AMP + beta-nicotinamide D-nucleotide.. In terms of biological role, DNA ligase that catalyzes the formation of phosphodiester linkages between 5'-phosphoryl and 3'-hydroxyl groups in double-stranded DNA using NAD as a coenzyme and as the energy source for the reaction. It is essential for DNA replication and repair of damaged DNA. The chain is DNA ligase from Helicobacter pylori (strain ATCC 700392 / 26695) (Campylobacter pylori).